We begin with the raw amino-acid sequence, 572 residues long: Proline--tRNA ligase (572 aa).

It belongs to the class-II aminoacyl-tRNA synthetase family. ProS type 1 subfamily. Homodimer.

It is found in the cytoplasm. The catalysed reaction is tRNA(Pro) + L-proline + ATP = L-prolyl-tRNA(Pro) + AMP + diphosphate. Functionally, catalyzes the attachment of proline to tRNA(Pro) in a two-step reaction: proline is first activated by ATP to form Pro-AMP and then transferred to the acceptor end of tRNA(Pro). As ProRS can inadvertently accommodate and process non-cognate amino acids such as alanine and cysteine, to avoid such errors it has two additional distinct editing activities against alanine. One activity is designated as 'pretransfer' editing and involves the tRNA(Pro)-independent hydrolysis of activated Ala-AMP. The other activity is designated 'posttransfer' editing and involves deacylation of mischarged Ala-tRNA(Pro). The misacylated Cys-tRNA(Pro) is not edited by ProRS. The protein is Proline--tRNA ligase of Citrobacter koseri (strain ATCC BAA-895 / CDC 4225-83 / SGSC4696).